The following is a 182-amino-acid chain: Lipoprotein signal peptidase (182 aa).

4 helical membrane passes run 15–35, 44–64, 65–85, and 97–117; these read IYLG…FLVI, LEVF…FVFG, AFQD…VFLI, and PWGW…KFFV. Active-site residues include D140 and D162. The chain crosses the membrane as a helical span at residues 155–175; it reads WPAFNVADSCVTIGLTILIFT.

Belongs to the peptidase A8 family.

The protein localises to the cell inner membrane. It catalyses the reaction Release of signal peptides from bacterial membrane prolipoproteins. Hydrolyzes -Xaa-Yaa-Zaa-|-(S,diacylglyceryl)Cys-, in which Xaa is hydrophobic (preferably Leu), and Yaa (Ala or Ser) and Zaa (Gly or Ala) have small, neutral side chains.. It functions in the pathway protein modification; lipoprotein biosynthesis (signal peptide cleavage). Functionally, this protein specifically catalyzes the removal of signal peptides from prolipoproteins. This chain is Lipoprotein signal peptidase, found in Leptospira interrogans serogroup Icterohaemorrhagiae serovar Lai (strain 56601).